The chain runs to 590 residues: Arginine--tRNA ligase (590 aa).

The 'HIGH' region motif lies at 130–140; sequence ANPTGPMHVGH.

This sequence belongs to the class-I aminoacyl-tRNA synthetase family. As to quaternary structure, monomer.

The protein resides in the cytoplasm. It catalyses the reaction tRNA(Arg) + L-arginine + ATP = L-arginyl-tRNA(Arg) + AMP + diphosphate. This chain is Arginine--tRNA ligase, found in Methylobacterium nodulans (strain LMG 21967 / CNCM I-2342 / ORS 2060).